Here is a 142-residue protein sequence, read N- to C-terminus: Midkine-B (142 aa).

Residues 1 to 20 form the signal peptide; sequence MELRAFCVILLITILAVSSQ. 5 disulfide bridges follow: cysteine 36–cysteine 60, cysteine 44–cysteine 69, cysteine 51–cysteine 73, cysteine 83–cysteine 115, and cysteine 93–cysteine 125.

This sequence belongs to the pleiotrophin family. In terms of tissue distribution, in adults, expression is highest in the brain, eye and bone, with lower expression in the heart and lung. Not expressed in the ovary. In the tailbud stage embryo, expressed in the head and tail regions as well as in the central nervous system (CNS).

It is found in the secreted. In terms of biological role, secreted protein that functions as a cytokine and growth factor and mediates its signal through cell-surface proteoglycan and non-proteoglycan receptors. Binds cell-surface proteoglycan receptors via their chondroitin sulfate (CS) groups. Thereby regulates many processes like inflammatory response, cell proliferation, cell adhesion, cell growth, cell survival, tissue regeneration, cell differentiation and cell migration. Inhibits mesoderm formation and promotes neural formation during development. Plays a role in development of the neuromuscular junction (NMJ). Has antibacterial activity against both Gram-positive and Gram-negative bacteria. The sequence is that of Midkine-B (mdk-b) from Xenopus laevis (African clawed frog).